The sequence spans 282 residues: AVPPSYADLGKSARDIFNKGYGFGLVKLDVKTKSATGVEFTTSGTSNTDSGKVNGSLETKYKWGEYGLTFTEKWNTDNTLGTEIAIEDQIAKGLKLTFDTTFSPNTGKKSGKVKAAYKQEYVNLGCDVDFDFAGPAIHGSAVVGYEGWLAGYQMTFDSAKSKLTKNNFAVGYKTGDFQLHTNVNDGSEFAGSIYQKVSDKMETAVNLAWTSGNNSTRFGIAAKYQLDSHAAISAKVNNSSLVGVGYTQTLRPGVKLTLSALVDGKNINAGGHKLGLGLELEA.

At Ala-1 the chain carries N-acetylalanine. The next 19 beta stranded transmembrane spans lie at 25 to 34 (LVKLDVKTKS), 38 to 46 (VEFTTSGTS), 53 to 63 (VNGSLETKYKW), 68 to 75 (LTFTEKWN), 79 to 88 (TLGTEIAIED), 94 to 103 (LKLTFDTTFS), 110 to 119 (SGKVKAAYKQ), 122 to 129 (VNLGCDVD), 136 to 144 (AIHGSAVVG), 149 to 157 (LAGYQMTFD), 162 to 174 (KLTKNNFAVGYKT), 177 to 184 (FQLHTNVN), 188 to 197 (EFAGSIYQKV), 201 to 210 (METAVNLAWT), 217 to 226 (RFGIAAKYQL), 230 to 237 (AAISAKVN), 241 to 250 (LVGVGYTQTL), 253 to 262 (GVKLTLSALV), and 272 to 281 (HKLGLGLELE). NAD(+) is bound by residues 241 to 243 (LVG) and 259 to 263 (SALVD).

Belongs to the eukaryotic mitochondrial porin family. As to quaternary structure, monomer, homodimer and higher order oligomers; formation of higher order structures is necessary for scramblase activity. In terms of tissue distribution, expressed in skeletal muscle and oocytes.

It is found in the mitochondrion outer membrane. The protein localises to the membrane. The enzyme catalyses chloride(in) = chloride(out). It carries out the reaction K(+)(in) = K(+)(out). The catalysed reaction is a 1,2-diacyl-sn-glycero-3-phospho-L-serine(in) = a 1,2-diacyl-sn-glycero-3-phospho-L-serine(out). It catalyses the reaction a 1,2-diacyl-sn-glycero-3-phosphocholine(in) = a 1,2-diacyl-sn-glycero-3-phosphocholine(out). The enzyme catalyses a 1,2-diacyl-sn-glycero-3-phospho-(1D-myo-inositol)(in) = a 1,2-diacyl-sn-glycero-3-phospho-(1D-myo-inositol)(out). Its function is as follows. Non-selective voltage-gated ion channel that mediates the transport of anions and cations through the mitochondrion outer membrane and plasma membrane. The channel adopts an open conformation at zero mV and a closed conformation at both positive and negative potentials. There are two populations of channels; the main that functions in a lower open-state conductance with lower ion selectivity, that switch, in a voltage-dependent manner, from the open to a low-conducting 'closed' state and the other that has a normal ion selectivity in the typical high conductance, 'open' state. Functionally, catalyzes the scrambling of phospholipids across the outer mitochondrial membrane; the mechanism is unrelated to channel activity and is capable of translocating both anionic and zwitterionic phospholipids. In Xenopus laevis (African clawed frog), this protein is Non-selective voltage-gated ion channel VDAC2.